Reading from the N-terminus, the 105-residue chain is Putative RNA-binding protein RbpF (105 aa).

Residues 2-79 (SIYVGNLSYE…RDLKVNKAKP (78 aa)) form the RRM domain. The span at 75–84 (NKAKPKEDRG) shows a compositional bias: basic and acidic residues. The disordered stretch occupies residues 75–105 (NKAKPKEDRGSFGGGNRGGYGGGGGGGRSRY). Over residues 85-105 (SFGGGNRGGYGGGGGGGRSRY) the composition is skewed to gly residues.

The chain is Putative RNA-binding protein RbpF (rbpF) from Nostoc sp. (strain PCC 7120 / SAG 25.82 / UTEX 2576).